The sequence spans 199 residues: Imidazoleglycerol-phosphate dehydratase (199 aa).

Belongs to the imidazoleglycerol-phosphate dehydratase family.

The protein resides in the cytoplasm. It catalyses the reaction D-erythro-1-(imidazol-4-yl)glycerol 3-phosphate = 3-(imidazol-4-yl)-2-oxopropyl phosphate + H2O. It participates in amino-acid biosynthesis; L-histidine biosynthesis; L-histidine from 5-phospho-alpha-D-ribose 1-diphosphate: step 6/9. This Roseiflexus sp. (strain RS-1) protein is Imidazoleglycerol-phosphate dehydratase.